Reading from the N-terminus, the 224-residue chain is Respiratory supercomplex factor 2, mitochondrial (224 aa).

Residues 1 to 13 are Mitochondrial intermembrane-facing; that stretch reads MKILTQDEIEAHR. The helical transmembrane segment at 14–38 threads the bilayer; sequence SHTLKGGIEGALAGFAISAIIFKVL. Residues 39 to 47 are Mitochondrial matrix-facing; it reads PRRYPKFKP. A helical membrane pass occupies residues 48–75; the sequence is STLTWSIKTALWITPPTVLTAICAEEAS. At 76 to 103 the chain is on the mitochondrial intermembrane side; that stretch reads NNFDATMYGSGSSSEDALDEHRRWKSLS. An HIG1 domain is found at 89–180; the sequence is SEDALDEHRR…YENKLHPNKQ (92 aa). A helical transmembrane segment spans residues 104–133; that stretch reads TKDKFVEGLSNNKYKIITGAWAASLYGSWV. Residues 134–142 are Mitochondrial matrix-facing; the sequence is IVNKDPIMT. Residues 143 to 173 traverse the membrane as a helical segment; the sequence is KAQKIVQARMYAQFITVGLLLASVGLSMYEN. Over 174-184 the chain is Mitochondrial intermembrane; it reads KLHPNKQKVNE. Residues 185–204 form a helical membrane-spanning segment; sequence MRRWENALRVAEEEERLEKE. Residues 205–224 are Mitochondrial matrix-facing; it reads GRRTGYVSNEERINSKIFKS.

As to quaternary structure, associates with a subpopulation of the cytochrome bc1-cytochrome c oxidase supercomplexes. Associates in substoichiometric amounts with complex IV. Interacts with COX3.

It is found in the mitochondrion membrane. Assembly factor that plays a role in the assembly of the respiratory chain supercomplexes (SCs) composed of ubiquinol-cytochrome c oxidoreductase (cytochrome b-c1 complex, complex III, CIII) and cytochrome c oxidase (complex IV, CIV). May be required for late-stage assembly of the COX12 and COX13 subunits. Required for the generation and maintenance of a normal proton motive force (PMF) across the inner mitochondrial membrane (IMM) by preventing proton leakage through an inactive population of CIV that accumulates when RCF1 and/or RCF2 proteins are absent. The sequence is that of Respiratory supercomplex factor 2, mitochondrial (RCF2) from Saccharomyces cerevisiae (strain ATCC 204508 / S288c) (Baker's yeast).